Here is a 299-residue protein sequence, read N- to C-terminus: Acetylglutamate kinase (299 aa).

Residues 70 to 71 (GG), Arg-92, and Asn-186 contribute to the substrate site.

It belongs to the acetylglutamate kinase family. ArgB subfamily.

It is found in the cytoplasm. The catalysed reaction is N-acetyl-L-glutamate + ATP = N-acetyl-L-glutamyl 5-phosphate + ADP. It functions in the pathway amino-acid biosynthesis; L-arginine biosynthesis; N(2)-acetyl-L-ornithine from L-glutamate: step 2/4. In terms of biological role, catalyzes the ATP-dependent phosphorylation of N-acetyl-L-glutamate. This chain is Acetylglutamate kinase, found in Petrotoga mobilis (strain DSM 10674 / SJ95).